The sequence spans 191 residues: Putative resolvase L103 (191 aa).

The H-T-H motif DNA-binding region spans 11 to 30; it reads LEVLKVHYQTLYRMEEKGLI. Residues 59-191 form the Resolvase/invertase-type recombinase catalytic domain; that stretch reads KGICYCRVSS…KKSGKLKAKK (133 aa). Positions 65–91 form a coiled coil; it reads RVSSKKQIKDLNRQVEYMEKNYPEYEI. Residue Ser67 is the O-(5'-phospho-DNA)-serine intermediate of the active site.

Belongs to the site-specific recombinase resolvase family.

In terms of biological role, resolvase catalyzes the resolution (a site-specific recombination) of the cointegrated replicon to yield the final transposition products. This Acanthamoeba polyphaga (Amoeba) protein is Putative resolvase L103.